The following is a 305-amino-acid chain: Aspartate carbamoyltransferase catalytic subunit (305 aa).

The carbamoyl phosphate site is built by Arg-54 and Thr-55. Lys-83 serves as a coordination point for L-aspartate. Arg-104, His-132, and Gln-135 together coordinate carbamoyl phosphate. The L-aspartate site is built by Arg-165 and Arg-226. 2 residues coordinate carbamoyl phosphate: Leu-265 and Pro-266.

The protein belongs to the aspartate/ornithine carbamoyltransferase superfamily. ATCase family. Heterooligomer of catalytic and regulatory chains.

The enzyme catalyses carbamoyl phosphate + L-aspartate = N-carbamoyl-L-aspartate + phosphate + H(+). Its pathway is pyrimidine metabolism; UMP biosynthesis via de novo pathway; (S)-dihydroorotate from bicarbonate: step 2/3. In terms of biological role, catalyzes the condensation of carbamoyl phosphate and aspartate to form carbamoyl aspartate and inorganic phosphate, the committed step in the de novo pyrimidine nucleotide biosynthesis pathway. The sequence is that of Aspartate carbamoyltransferase catalytic subunit from Pyrobaculum arsenaticum (strain DSM 13514 / JCM 11321 / PZ6).